The primary structure comprises 616 residues: Dihydroxy-acid dehydratase (616 aa).

D81 is a Mg(2+) binding site. C122 contributes to the [2Fe-2S] cluster binding site. Mg(2+)-binding residues include D123 and K124. Residue K124 is modified to N6-carboxylysine. C195 lines the [2Fe-2S] cluster pocket. Residue E491 coordinates Mg(2+). The active-site Proton acceptor is S517.

It belongs to the IlvD/Edd family. In terms of assembly, homodimer. It depends on [2Fe-2S] cluster as a cofactor. Mg(2+) is required as a cofactor.

It catalyses the reaction (2R)-2,3-dihydroxy-3-methylbutanoate = 3-methyl-2-oxobutanoate + H2O. The catalysed reaction is (2R,3R)-2,3-dihydroxy-3-methylpentanoate = (S)-3-methyl-2-oxopentanoate + H2O. Its pathway is amino-acid biosynthesis; L-isoleucine biosynthesis; L-isoleucine from 2-oxobutanoate: step 3/4. The protein operates within amino-acid biosynthesis; L-valine biosynthesis; L-valine from pyruvate: step 3/4. In terms of biological role, functions in the biosynthesis of branched-chain amino acids. Catalyzes the dehydration of (2R,3R)-2,3-dihydroxy-3-methylpentanoate (2,3-dihydroxy-3-methylvalerate) into 2-oxo-3-methylpentanoate (2-oxo-3-methylvalerate) and of (2R)-2,3-dihydroxy-3-methylbutanoate (2,3-dihydroxyisovalerate) into 2-oxo-3-methylbutanoate (2-oxoisovalerate), the penultimate precursor to L-isoleucine and L-valine, respectively. In Salmonella newport (strain SL254), this protein is Dihydroxy-acid dehydratase.